The chain runs to 58 residues: Photosystem II reaction center protein K (58 aa).

Residues 1–21 (MLNMISTFFDSSSNFSEAFLA) constitute a propeptide that is removed on maturation. Residues 29 to 49 (IFDPIVDVMPIIPVFFLLLAF) traverse the membrane as a helical segment.

This sequence belongs to the PsbK family. As to quaternary structure, PSII is composed of 1 copy each of membrane proteins PsbA, PsbB, PsbC, PsbD, PsbE, PsbF, PsbH, PsbI, PsbJ, PsbK, PsbL, PsbM, PsbT, PsbX, PsbY, PsbZ, Psb30/Ycf12, at least 3 peripheral proteins of the oxygen-evolving complex and a large number of cofactors. It forms dimeric complexes.

It localises to the plastid. It is found in the chloroplast thylakoid membrane. In terms of biological role, one of the components of the core complex of photosystem II (PSII). PSII is a light-driven water:plastoquinone oxidoreductase that uses light energy to abstract electrons from H(2)O, generating O(2) and a proton gradient subsequently used for ATP formation. It consists of a core antenna complex that captures photons, and an electron transfer chain that converts photonic excitation into a charge separation. In Chaetosphaeridium globosum (Charophycean green alga), this protein is Photosystem II reaction center protein K.